We begin with the raw amino-acid sequence, 179 residues long: Large ribosomal subunit protein uL6 (179 aa).

This sequence belongs to the universal ribosomal protein uL6 family. In terms of assembly, part of the 50S ribosomal subunit.

Its function is as follows. This protein binds to the 23S rRNA, and is important in its secondary structure. It is located near the subunit interface in the base of the L7/L12 stalk, and near the tRNA binding site of the peptidyltransferase center. This is Large ribosomal subunit protein uL6 from Pelobacter propionicus (strain DSM 2379 / NBRC 103807 / OttBd1).